Consider the following 353-residue polypeptide: Feruloyl esterase B (353 aa).

The signal sequence occupies residues 1-18 (MAIPLVLVLAWLLPVVLA). The interval 19 to 291 (ASLTQVNNFG…VSVVLDWFGI (273 aa)) is catalytic. Serine 136 (charge relay system) is an active-site residue. N-linked (GlcNAc...) asparagine glycans are attached at residues asparagine 179 and asparagine 246. The 37-residue stretch at 317-353 (CTAAHWAQCGGIGYSGCTACASPYTCQKANDYYSQCL) folds into the CBM1 domain.

This sequence belongs to the carbohydrate esterase 1 (CE1) family. Feruloyl esterase type B subfamily. Glycosylated.

The protein localises to the secreted. The catalysed reaction is feruloyl-polysaccharide + H2O = ferulate + polysaccharide.. With respect to regulation, inhibited by the specific serine esterase inhibitor AEBSF. Functionally, involved in degradation of plant cell walls. Hydrolyzes the feruloyl-arabinose ester bond in arabinoxylans, and the feruloyl-galactose and feruloyl-arabinose ester bonds in pectin. Binds strongly to cellulose. This chain is Feruloyl esterase B (FAEB), found in Talaromyces funiculosus (Fruitlet core rot fungus).